A 379-amino-acid polypeptide reads, in one-letter code: Cytochrome b (379 aa).

Transmembrane regions (helical) follow at residues 33–53 (FGSLLGACLTIQIITGLFLAM), 77–98 (WTIRYLHANGASLFFLCLFIHV), 113–133 (WNIGIMLLFSVMATAFMGYVL), and 178–198 (FFALHFILPFIISALTMIHLL). Residues His83 and His97 each contribute to the heme b site. Heme b is bound by residues His182 and His196. Residue His201 coordinates a ubiquinone. 4 helical membrane-spanning segments follow: residues 226-246 (TKDFLGLLLLILLLMTLTLFY), 288-308 (LGGVVALIMSILILAIMPFLQ), 320-340 (LSQFLFWILVADLLTLTWIGG), and 347-367 (FINIGQMASILYFSLMVFIMP).

The protein belongs to the cytochrome b family. As to quaternary structure, the cytochrome bc1 complex contains 11 subunits: 3 respiratory subunits (MT-CYB, CYC1 and UQCRFS1), 2 core proteins (UQCRC1 and UQCRC2) and 6 low-molecular weight proteins (UQCRH/QCR6, UQCRB/QCR7, UQCRQ/QCR8, UQCR10/QCR9, UQCR11/QCR10 and a cleavage product of UQCRFS1). This cytochrome bc1 complex then forms a dimer. Heme b serves as cofactor.

It is found in the mitochondrion inner membrane. Its function is as follows. Component of the ubiquinol-cytochrome c reductase complex (complex III or cytochrome b-c1 complex) that is part of the mitochondrial respiratory chain. The b-c1 complex mediates electron transfer from ubiquinol to cytochrome c. Contributes to the generation of a proton gradient across the mitochondrial membrane that is then used for ATP synthesis. In Lepilemur aeeclis (Sportive lemur), this protein is Cytochrome b (MT-CYB).